The following is a 266-amino-acid chain: Shikimate dehydrogenase (NADP(+)) (266 aa).

Shikimate-binding positions include 16–18 and threonine 65; that span reads SKS. The active-site Proton acceptor is the lysine 69. Shikimate is bound by residues asparagine 90 and aspartate 105. Residues 128–132 and leucine 211 each bind NADP(+); that span reads GAGGS. Residue tyrosine 213 coordinates shikimate. Residue glycine 233 coordinates NADP(+).

This sequence belongs to the shikimate dehydrogenase family. As to quaternary structure, homodimer.

The catalysed reaction is shikimate + NADP(+) = 3-dehydroshikimate + NADPH + H(+). It functions in the pathway metabolic intermediate biosynthesis; chorismate biosynthesis; chorismate from D-erythrose 4-phosphate and phosphoenolpyruvate: step 4/7. Its function is as follows. Involved in the biosynthesis of the chorismate, which leads to the biosynthesis of aromatic amino acids. Catalyzes the reversible NADPH linked reduction of 3-dehydroshikimate (DHSA) to yield shikimate (SA). The protein is Shikimate dehydrogenase (NADP(+)) of Helicobacter pylori (strain J99 / ATCC 700824) (Campylobacter pylori J99).